Consider the following 543-residue polypeptide: Hydroxylamine reductase (543 aa).

[4Fe-4S] cluster is bound by residues C5, C8, C17, and C23. Positions 236, 260, 304, 398, 426, 451, 486, and 488 each coordinate hybrid [4Fe-2O-2S] cluster. At C398 the chain carries Cysteine persulfide.

The protein belongs to the HCP family. The cofactor is [4Fe-4S] cluster. Hybrid [4Fe-2O-2S] cluster is required as a cofactor.

It localises to the cytoplasm. The enzyme catalyses A + NH4(+) + H2O = hydroxylamine + AH2 + H(+). In terms of biological role, catalyzes the reduction of hydroxylamine to form NH(3) and H(2)O. The polypeptide is Hydroxylamine reductase (Bacteroides fragilis (strain ATCC 25285 / DSM 2151 / CCUG 4856 / JCM 11019 / LMG 10263 / NCTC 9343 / Onslow / VPI 2553 / EN-2)).